We begin with the raw amino-acid sequence, 288 residues long: Small ribosomal subunit protein uS3 (288 aa).

In terms of domain architecture, KH type-2 spans 38–106 (IRRMMSKGLE…QVQLNIIEVK (69 aa)). Positions 209–288 (PGRETPAEAP…TQPAETQQEG (80 aa)) are disordered. Over residues 219–232 (SRPRRERGDRSERP) the composition is skewed to basic and acidic residues. Low complexity predominate over residues 249–264 (AGRAAATTIAQAAETP). Residues 277 to 288 (AATQPAETQQEG) show a composition bias toward polar residues.

The protein belongs to the universal ribosomal protein uS3 family. Part of the 30S ribosomal subunit. Forms a tight complex with proteins S10 and S14.

In terms of biological role, binds the lower part of the 30S subunit head. Binds mRNA in the 70S ribosome, positioning it for translation. The chain is Small ribosomal subunit protein uS3 from Salinispora arenicola (strain CNS-205).